The sequence spans 150 residues: Con-Ins Im1 (150 aa).

An N-terminal signal peptide occupies residues 1 to 25 (MATSLLSPLLVAMLGFLLHVHVARA). 4 disulfide bridges follow: Cys-31/Cys-133, Cys-46/Cys-136, Cys-58/Cys-149, and Cys-135/Cys-140. Positions 64–111 (GYAGGQRQLRKRTSMIDSDDMEAEGGSRGGFLMSKRRALSYLQKETNP) are cleaved as a propeptide — c peptide. Residue Glu-144 is modified to 4-carboxyglutamate; partial.

It belongs to the insulin family. Heterodimer of A and B chains; disulfide-linked. Expressed by the venom gland.

It is found in the secreted. This venom insulin facilitates prey capture by rapidly inducing hypoglycemic shock. Intraperitoneal injection of this peptide into zebrafish lowers blood glucose with the same potency than human insulin. In vivo, when applied to water, this peptide reduces overall locomotor activity of zebrafish larvae, observed as a significant decrease in the percentage of time spent swimming and movement frequency. This Conus imperialis (Imperial cone) protein is Con-Ins Im1.